A 1206-amino-acid chain; its full sequence is DNA-directed RNA polymerase subunit beta' (1206 aa).

The Zn(2+) site is built by Cys-60, Cys-62, Cys-75, and Cys-78. Residues Asp-449, Asp-451, and Asp-453 each coordinate Mg(2+). Positions 822, 896, 903, and 906 each coordinate Zn(2+).

This sequence belongs to the RNA polymerase beta' chain family. In terms of assembly, the RNAP catalytic core consists of 2 alpha, 1 beta, 1 beta' and 1 omega subunit. When a sigma factor is associated with the core the holoenzyme is formed, which can initiate transcription. It depends on Mg(2+) as a cofactor. Zn(2+) is required as a cofactor.

The catalysed reaction is RNA(n) + a ribonucleoside 5'-triphosphate = RNA(n+1) + diphosphate. Functionally, DNA-dependent RNA polymerase catalyzes the transcription of DNA into RNA using the four ribonucleoside triphosphates as substrates. The protein is DNA-directed RNA polymerase subunit beta' of Staphylococcus haemolyticus (strain JCSC1435).